A 363-amino-acid chain; its full sequence is Aspartate-semialdehyde dehydrogenase (363 aa).

Residues threonine 15, glycine 16, serine 17, valine 18, serine 40, serine 43, and leucine 87 each coordinate NADP(+). Catalysis depends on cysteine 154, which acts as the Acyl-thioester intermediate. Glycine 186 lines the NADP(+) pocket. Histidine 251 functions as the Proton acceptor in the catalytic mechanism. Asparagine 341 is a binding site for NADP(+).

This sequence belongs to the aspartate-semialdehyde dehydrogenase family. As to quaternary structure, homotetramer; dimer of dimers.

The protein localises to the cytoplasm. Its subcellular location is the cytosol. It localises to the nucleus. The enzyme catalyses L-aspartate 4-semialdehyde + phosphate + NADP(+) = 4-phospho-L-aspartate + NADPH + H(+). It functions in the pathway amino-acid biosynthesis; L-methionine biosynthesis via de novo pathway; L-homoserine from L-aspartate: step 2/3. The protein operates within amino-acid biosynthesis; L-threonine biosynthesis; L-threonine from L-aspartate: step 2/5. With respect to regulation, inhibited by 4-amino-3-hydroxynaphthalene-1-sulfonic acid and the competitive inhibitor 1,4-benzoquinone and derivates such as 2-chloro-3-methoxy-1,4-naphthoquinone, 2,3-dichloro-1,4-naphthoquinone, 2-chloro-1,4-naphthoquinone, 2-bromo-1,4-naphthoquinone and 2,3-dichloro-5,8-dihydroxy-1,4-naphthoquinone. Catalyzes the NADPH-dependent formation of L-aspartate 4-semialdehyde (L-ASA) by the reductive dephosphorylation of 4-phospho-L-aspartate. Mediates the second step in the biosynthesis of amino acids that derive from aspartate (the aspartate family of amino acids), including methioinine and threonine, the latter of which is a precursor to isoleucine. The sequence is that of Aspartate-semialdehyde dehydrogenase from Aspergillus fumigatus (strain ATCC MYA-4609 / CBS 101355 / FGSC A1100 / Af293) (Neosartorya fumigata).